The following is a 92-amino-acid chain: Small ribosomal subunit protein uS19 (92 aa).

Belongs to the universal ribosomal protein uS19 family.

In terms of biological role, protein S19 forms a complex with S13 that binds strongly to the 16S ribosomal RNA. The polypeptide is Small ribosomal subunit protein uS19 (Methylobacterium radiotolerans (strain ATCC 27329 / DSM 1819 / JCM 2831 / NBRC 15690 / NCIMB 10815 / 0-1)).